The chain runs to 108 residues: Ig kappa chain V-V region HP R16.7 (108 aa).

The tract at residues 1–23 (DIQMTQTTSSLSASLGDRVTISC) is framework-1. Cys-23 and Cys-88 are oxidised to a cystine. The interval 24–34 (RASQDISNYLN) is complementarity-determining-1. The tract at residues 35-49 (WYQQKPDGTVKLLIY) is framework-2. Residues 50–56 (YTSRLHS) are complementarity-determining-2. Residues 57–88 (GVPSRFSGSGSGTDYSLTISNLEQEDIATYFC) form a framework-3 region. The interval 89 to 97 (QQGNSLPRT) is complementarity-determining-3. A framework-4 region spans residues 98–108 (FGGGTKLEIKR).

In Mus musculus (Mouse), this protein is Ig kappa chain V-V region HP R16.7.